Reading from the N-terminus, the 220-residue chain is MADS-box protein AGL24 (220 aa).

The region spanning 1–61 is the MADS-box domain; it reads MAREKIRIKK…GKLFEFSSSR (61 aa). The 91-residue stretch at 87–177 folds into the K-box domain; that stretch reads LRLENCNLSR…RDKLETLERA (91 aa). A compositionally biased stretch (polar residues) spans 190–200; it reads SVTTNVSSYDS. The interval 190–220 is disordered; that stretch reads SVTTNVSSYDSGTPLEDDSDTSLKLGLPSWE.

In terms of assembly, interacts with IMK3/MRLK. Forms a homodimer and heterodimer with SOC1, AP1 and SVP through MADS-box domain. Interacts with the SEU-LUG corepressor complex when complexed to AP1. Interacts with AGL15 and AGL16. Post-translationally, phosphorylated by IMK3. Induced by vernalization. In terms of tissue distribution, mostly expressed in shoot apical meristems, including floral meristems. Also detected in stems, seedlings, leaves, flowers and siliques, and, to a lower extent, in roots.

Its subcellular location is the nucleus. It is found in the cytoplasm. Transcription activator that mediates floral transition in response to vernalization. Promotes inflorescence fate in apical meristems. Acts in a dosage-dependent manner. Probably involved in the transduction of RLK-mediated signaling (e.g. IMK3 pathway). Together with AP1 and SVP, controls the identity of the floral meristem and regulates expression of class B, C and E genes. When associated with SOC1, mediates effect of gibberellins on flowering under short-day conditions, and regulates the expression of LEAFY (LFY), which links floral induction and floral development. Confers inflorescence characteristics to floral primordia and early flowering. The protein is MADS-box protein AGL24 (AGL24) of Arabidopsis thaliana (Mouse-ear cress).